The sequence spans 474 residues: Glutamate--tRNA ligase 1 (474 aa).

A 'HIGH' region motif is present at residues 11–21; sequence PSPTGYLHIGG. Positions 240-244 match the 'KMSKS' region motif; the sequence is KLSKR. Lys-243 is an ATP binding site.

This sequence belongs to the class-I aminoacyl-tRNA synthetase family. Glutamate--tRNA ligase type 1 subfamily. As to quaternary structure, monomer.

The protein localises to the cytoplasm. It carries out the reaction tRNA(Glu) + L-glutamate + ATP = L-glutamyl-tRNA(Glu) + AMP + diphosphate. Catalyzes the attachment of glutamate to tRNA(Glu) in a two-step reaction: glutamate is first activated by ATP to form Glu-AMP and then transferred to the acceptor end of tRNA(Glu). In Mesorhizobium japonicum (strain LMG 29417 / CECT 9101 / MAFF 303099) (Mesorhizobium loti (strain MAFF 303099)), this protein is Glutamate--tRNA ligase 1.